We begin with the raw amino-acid sequence, 361 residues long: Methionine import ATP-binding protein MetN (361 aa).

In terms of domain architecture, ABC transporter spans 22–257 (VRLIDVKRRF…PQTDITRSLL (236 aa)). 54 to 61 (GRSGAGKS) contacts ATP.

The protein belongs to the ABC transporter superfamily. Methionine importer (TC 3.A.1.24) family. In terms of assembly, the complex is composed of two ATP-binding proteins (MetN), two transmembrane proteins (MetI) and a solute-binding protein (MetQ).

It localises to the cell inner membrane. The catalysed reaction is L-methionine(out) + ATP + H2O = L-methionine(in) + ADP + phosphate + H(+). It carries out the reaction D-methionine(out) + ATP + H2O = D-methionine(in) + ADP + phosphate + H(+). Functionally, part of the ABC transporter complex MetNIQ involved in methionine import. Responsible for energy coupling to the transport system. The sequence is that of Methionine import ATP-binding protein MetN from Rhizobium etli (strain ATCC 51251 / DSM 11541 / JCM 21823 / NBRC 15573 / CFN 42).